The sequence spans 1034 residues: Ice nucleation protein InaU (1034 aa).

The segment at 162-993 (ATYGSTLSGT…LTAGENSVLI (832 aa)) is octapeptide periodicity. 6 disordered regions span residues 260–287 (YGST…KGSD), 311–342 (TQTA…GYGS), 356–383 (YGST…KGSD), 407–438 (TQTA…GYGS), 452–480 (YGST…GSDL), and 570–597 (AREG…TGYG). Composition is skewed to polar residues over residues 261–286 (GSTQ…QKGS), 311–334 (TQTA…QKGS), 357–382 (GSTQ…QKGS), 407–430 (TQTA…QKGS), 453–480 (GSTQ…GSDL), and 580–592 (YGST…NSDL).

It belongs to the bacterial ice nucleation protein family.

Its subcellular location is the cell outer membrane. Ice nucleation proteins enable bacteria to nucleate crystallization in supercooled water. This chain is Ice nucleation protein InaU (inaU), found in Pantoea ananas (Erwinia uredovora).